A 347-amino-acid chain; its full sequence is NADH-ubiquinone oxidoreductase chain 2 (347 aa).

10 helical membrane-spanning segments follow: residues P3 to S23, H25 to M45, A66 to I86, F111 to L131, I149 to G169, I178 to P198, M201 to L221, I237 to L257, D274 to M294, and L325 to I345.

Belongs to the complex I subunit 2 family. As to quaternary structure, core subunit of respiratory chain NADH dehydrogenase (Complex I) which is composed of 45 different subunits. Interacts with TMEM242.

The protein resides in the mitochondrion inner membrane. The enzyme catalyses a ubiquinone + NADH + 5 H(+)(in) = a ubiquinol + NAD(+) + 4 H(+)(out). Core subunit of the mitochondrial membrane respiratory chain NADH dehydrogenase (Complex I) which catalyzes electron transfer from NADH through the respiratory chain, using ubiquinone as an electron acceptor. Essential for the catalytic activity and assembly of complex I. The protein is NADH-ubiquinone oxidoreductase chain 2 of Vulpes vulpes (Red fox).